A 100-amino-acid chain; its full sequence is Suppressor of silencing 2b (100 aa).

A Nuclear localization signal motif is present at residues 22–27 (KRRRRR).

This sequence belongs to the cucumovirus/ilarvirus protein 2b family. Homotetramer. Interacts with host AGO1; this interaction blocks AGO1 cleavage activity to attenuate RNA silencing and thus counter host defense. Interacts with host JAZ.

Its subcellular location is the host nucleus. Its function is as follows. Multifunctional protein that plays two independent roles: viral suppressor of host RNAi (VSR) and viral inducer of host attractiveness to insect vectors (VIA). Acts as a suppressor of RNA-mediated gene silencing, also known as post-transcriptional gene silencing (PTGS), a mechanism of plant viral defense that limits the accumulation of viral RNAs. May directly interfere with mobile silencing signaling. Also inhibits signal transduction by the phytohormone jasmonate, making the infected plant more attractive to aphids, which are the second host to play a role as a dissemination vector. Acts by binding to and inhibiting JAZ degradation in the host. The polypeptide is Suppressor of silencing 2b (Cucumis sativus (Cucumber)).